The following is a 493-amino-acid chain: Non-cyanogenic beta-glucosidase (493 aa).

Positions 1–18 (MDFIVAIFALFVISSFTI) are cleaved as a signal peptide. An N-linked (GlcNAc...) asparagine glycan is attached at asparagine 34. A beta-D-glucoside-binding positions include glutamine 54, histidine 158, and 203-204 (NE). Glutamate 204 serves as the catalytic Proton donor. N-linked (GlcNAc...) asparagine glycosylation is present at asparagine 335. Tyrosine 346 lines the a beta-D-glucoside pocket. Residues asparagine 371 and asparagine 412 are each glycosylated (N-linked (GlcNAc...) asparagine). A beta-D-glucoside contacts are provided by residues glutamate 422, tryptophan 471, 478–479 (EW), and phenylalanine 487. Residue glutamate 422 is the Nucleophile of the active site.

It belongs to the glycosyl hydrolase 1 family. As to expression, leaves.

It catalyses the reaction Hydrolysis of terminal, non-reducing beta-D-glucosyl residues with release of beta-D-glucose.. The protein is Non-cyanogenic beta-glucosidase of Trifolium repens (Creeping white clover).